Here is a 277-residue protein sequence, read N- to C-terminus: Anamorsin homolog (277 aa).

Residues 1–160 (MDTKRMLQNS…NIGSSFALKK (160 aa)) are N-terminal SAM-like domain. The interval 161-188 (SIKSPVKVQNDDYSDLIDEDSLLTEEDL) is linker. The [2Fe-2S] cluster site is built by C199, C208, C211, and C213. The fe-S binding site A stretch occupies residues 199–213 (CEVGSTRKACKNCTC). Residues C238, C241, C249, and C252 each contribute to the [4Fe-4S] cluster site. Short sequence motifs (cx2C motif) lie at residues 238-241 (CGSC) and 249-252 (CGTC). The segment at 238–252 (CGSCGLGDAFRCGTC) is fe-S binding site B.

This sequence belongs to the anamorsin family. As to quaternary structure, monomer. The cofactor is [2Fe-2S] cluster. [4Fe-4S] cluster serves as cofactor.

The protein resides in the cytoplasm. The protein localises to the mitochondrion intermembrane space. Functionally, component of the cytosolic iron-sulfur (Fe-S) protein assembly (CIA) machinery. Required for the maturation of extramitochondrial Fe-S proteins. Part of an electron transfer chain functioning in an early step of cytosolic Fe-S biogenesis, facilitating the de novo assembly of a [4Fe-4S] cluster on the cytosolic Fe-S scaffold complex. Electrons are transferred from NADPH via a FAD- and FMN-containing diflavin oxidoreductase. Together with the diflavin oxidoreductase, also required for the assembly of the diferric tyrosyl radical cofactor of ribonucleotide reductase (RNR), probably by providing electrons for reduction during radical cofactor maturation in the catalytic small subunit. This is Anamorsin homolog from Populus trichocarpa (Western balsam poplar).